The chain runs to 337 residues: Glyceraldehyde-3-phosphate dehydrogenase (337 aa).

NAD(+) contacts are provided by residues 11–12 (TI) and G110. A D-glyceraldehyde 3-phosphate-binding site is contributed by 139–141 (SCN). C140 (nucleophile) is an active-site residue. R168 contacts NAD(+). Position 194–195 (194–195 (HG)) interacts with D-glyceraldehyde 3-phosphate. Residue Q301 coordinates NAD(+).

Belongs to the glyceraldehyde-3-phosphate dehydrogenase family. In terms of assembly, homotetramer.

The protein localises to the cytoplasm. The enzyme catalyses D-glyceraldehyde 3-phosphate + phosphate + NADP(+) = (2R)-3-phospho-glyceroyl phosphate + NADPH + H(+). The catalysed reaction is D-glyceraldehyde 3-phosphate + phosphate + NAD(+) = (2R)-3-phospho-glyceroyl phosphate + NADH + H(+). The protein operates within carbohydrate degradation; glycolysis; pyruvate from D-glyceraldehyde 3-phosphate: step 1/5. The sequence is that of Glyceraldehyde-3-phosphate dehydrogenase (gap) from Methanothermobacter thermautotrophicus (strain ATCC 29096 / DSM 1053 / JCM 10044 / NBRC 100330 / Delta H) (Methanobacterium thermoautotrophicum).